The sequence spans 186 residues: HGPRTase-like protein 3 (186 aa).

It belongs to the purine/pyrimidine phosphoribosyltransferase family. Archaeal HPRT subfamily.

Functionally, may catalyze a purine salvage reaction, the substrate is unknown. In Haloterrigena turkmenica (strain ATCC 51198 / DSM 5511 / JCM 9101 / NCIMB 13204 / VKM B-1734 / 4k) (Halococcus turkmenicus), this protein is HGPRTase-like protein 3.